We begin with the raw amino-acid sequence, 116 residues long: MNKCRFLSKNEEYRNIYQNGRSIASRYFVVYYLKNEDEKKLPSFGISVSKKIGKAVVRNRLRRRLKEALKRLCFEFLPGYDYVIIPRLSFKNDEFSVILEQLLYIIKLMKRSIDNA.

The protein belongs to the RnpA family. In terms of assembly, consists of a catalytic RNA component (M1 or rnpB) and a protein subunit.

The enzyme catalyses Endonucleolytic cleavage of RNA, removing 5'-extranucleotides from tRNA precursor.. In terms of biological role, RNaseP catalyzes the removal of the 5'-leader sequence from pre-tRNA to produce the mature 5'-terminus. It can also cleave other RNA substrates such as 4.5S RNA. The protein component plays an auxiliary but essential role in vivo by binding to the 5'-leader sequence and broadening the substrate specificity of the ribozyme. The chain is Ribonuclease P protein component from Carboxydothermus hydrogenoformans (strain ATCC BAA-161 / DSM 6008 / Z-2901).